The chain runs to 310 residues: tRNA dimethylallyltransferase (310 aa).

14–21 (GPTASGKT) provides a ligand contact to ATP. 16–21 (TASGKT) is a binding site for substrate. An interaction with substrate tRNA region spans residues 39–42 (DSMQ).

It belongs to the IPP transferase family. Monomer. It depends on Mg(2+) as a cofactor.

The catalysed reaction is adenosine(37) in tRNA + dimethylallyl diphosphate = N(6)-dimethylallyladenosine(37) in tRNA + diphosphate. Catalyzes the transfer of a dimethylallyl group onto the adenine at position 37 in tRNAs that read codons beginning with uridine, leading to the formation of N6-(dimethylallyl)adenosine (i(6)A). The chain is tRNA dimethylallyltransferase from Corynebacterium jeikeium (strain K411).